Consider the following 288-residue polypeptide: Mycothiol S-conjugate amidase (288 aa).

Histidine 12, aspartate 15, and histidine 142 together coordinate Zn(2+).

It belongs to the MshB deacetylase family. Mca subfamily. In terms of assembly, monomer. Requires Zn(2+) as cofactor.

It catalyses the reaction mycothiol S-conjugate + H2O = an N-acetyl-L-cysteine-S-conjugate + 1D-myo-inositol 2-amino-2-deoxy-alpha-D-glucopyranoside. Its activity is regulated as follows. Partially inhibited by MSH when MSmB (a bimane derivative of MSH) is used as substrate. Its function is as follows. A mycothiol (MSH, N-acetyl-cysteinyl-glucosaminyl-inositol) S-conjugate amidase, it recycles conjugated MSH to the N-acetyl cysteine conjugate and the MSH precursor. Involved in MSH-dependent detoxification of a number of alkylating agents and antibiotics. Activity is specific for the mycothiol moiety. The polypeptide is Mycothiol S-conjugate amidase (Mycolicibacterium smegmatis (strain ATCC 700084 / mc(2)155) (Mycobacterium smegmatis)).